The primary structure comprises 585 residues: A-type ATP synthase subunit A (585 aa).

231–238 (GPFGSGKT) contacts ATP.

This sequence belongs to the ATPase alpha/beta chains family. In terms of assembly, has multiple subunits with at least A(3), B(3), C, D, E, F, H, I and proteolipid K(x).

It localises to the cell membrane. It catalyses the reaction ATP + H2O + 4 H(+)(in) = ADP + phosphate + 5 H(+)(out). In terms of biological role, produces ATP from ADP in the presence of a proton gradient across the membrane. The archaeal alpha chain is a catalytic subunit. Its function is as follows. Component of the A-type ATP synthase that produces ATP from ADP in the presence of a proton gradient across the membrane. The A chain is the catalytic subunit. This Thermococcus kodakarensis (strain ATCC BAA-918 / JCM 12380 / KOD1) (Pyrococcus kodakaraensis (strain KOD1)) protein is A-type ATP synthase subunit A.